A 248-amino-acid chain; its full sequence is 3-deoxy-manno-octulosonate cytidylyltransferase (248 aa).

Belongs to the KdsB family. Requires Mg(2+) as cofactor.

The protein localises to the cytoplasm. The catalysed reaction is 3-deoxy-alpha-D-manno-oct-2-ulosonate + CTP = CMP-3-deoxy-beta-D-manno-octulosonate + diphosphate. It functions in the pathway nucleotide-sugar biosynthesis; CMP-3-deoxy-D-manno-octulosonate biosynthesis; CMP-3-deoxy-D-manno-octulosonate from 3-deoxy-D-manno-octulosonate and CTP: step 1/1. Its pathway is bacterial outer membrane biogenesis; lipopolysaccharide biosynthesis. Activates KDO (a required 8-carbon sugar) for incorporation into bacterial lipopolysaccharide in Gram-negative bacteria. This is 3-deoxy-manno-octulosonate cytidylyltransferase from Escherichia coli O157:H7.